Here is a 358-residue protein sequence, read N- to C-terminus: Arogenate dehydrogenase 2, chloroplastic (358 aa).

The N-terminal 36 residues, 1-36 (MLLHFSPAKPLISPPNLRRNSPTFLISPPRSLRIRA), are a transit peptide targeting the chloroplast. Residues 59-338 (LKIAVLGFGN…KKTEQKLLND (280 aa)) form the Prephenate/arogenate dehydrogenase domain. Residues 336–358 (LNDGGVVPMNDISSSSSSSSSSS) are disordered. Residues 348-358 (SSSSSSSSSSS) show a composition bias toward low complexity.

This sequence belongs to the prephenate/arogenate dehydrogenase family. Expressed in roots, stems, leaves, flowers, siliques and seeds. More abundant in seeds.

It is found in the plastid. Its subcellular location is the chloroplast. It catalyses the reaction L-arogenate + NADP(+) = L-tyrosine + CO2 + NADPH. Its pathway is amino-acid biosynthesis; L-tyrosine biosynthesis; L-tyrosine from L-arogenate (NADP(+) route): step 1/1. Its function is as follows. Involved in the biosynthesis of tyrosine. Has a weak prephenate dehydrogenase activity. This is Arogenate dehydrogenase 2, chloroplastic (TYRAAT2) from Arabidopsis thaliana (Mouse-ear cress).